The following is a 196-amino-acid chain: Carnitine operon protein CaiE (196 aa).

The interval 173-196 is disordered; sequence TQPLRQMEENRPRLQGTTDVTPKR. Positions 187 to 196 are enriched in polar residues; it reads QGTTDVTPKR.

It belongs to the transferase hexapeptide repeat family.

It participates in amine and polyamine metabolism; carnitine metabolism. Overproduction of CaiE stimulates the activity of CaiB and CaiD. This is Carnitine operon protein CaiE from Escherichia coli O7:K1 (strain IAI39 / ExPEC).